Reading from the N-terminus, the 274-residue chain is 2,3,4,5-tetrahydropyridine-2,6-dicarboxylate N-succinyltransferase (274 aa).

2 residues coordinate substrate: R104 and D141.

It belongs to the transferase hexapeptide repeat family. As to quaternary structure, homotrimer.

Its subcellular location is the cytoplasm. It carries out the reaction (S)-2,3,4,5-tetrahydrodipicolinate + succinyl-CoA + H2O = (S)-2-succinylamino-6-oxoheptanedioate + CoA. Its pathway is amino-acid biosynthesis; L-lysine biosynthesis via DAP pathway; LL-2,6-diaminopimelate from (S)-tetrahydrodipicolinate (succinylase route): step 1/3. The sequence is that of 2,3,4,5-tetrahydropyridine-2,6-dicarboxylate N-succinyltransferase from Shewanella frigidimarina (strain NCIMB 400).